Reading from the N-terminus, the 186-residue chain is Elongation factor P (186 aa).

Belongs to the elongation factor P family.

Its subcellular location is the cytoplasm. The protein operates within protein biosynthesis; polypeptide chain elongation. Involved in peptide bond synthesis. Stimulates efficient translation and peptide-bond synthesis on native or reconstituted 70S ribosomes in vitro. Probably functions indirectly by altering the affinity of the ribosome for aminoacyl-tRNA, thus increasing their reactivity as acceptors for peptidyl transferase. In Shewanella sp. (strain W3-18-1), this protein is Elongation factor P.